The sequence spans 614 residues: UvrABC system protein C (614 aa).

Residues 16-94 (SRPGVYRMFG…VKSLKPRFNV (79 aa)) enclose the GIY-YIG domain. The region spanning 204 to 239 (GELQKRLASEMEAASEAMEFETAARLRDRIRAIAHV) is the UVR domain.

This sequence belongs to the UvrC family. Interacts with UvrB in an incision complex.

The protein resides in the cytoplasm. The UvrABC repair system catalyzes the recognition and processing of DNA lesions. UvrC both incises the 5' and 3' sides of the lesion. The N-terminal half is responsible for the 3' incision and the C-terminal half is responsible for the 5' incision. The polypeptide is UvrABC system protein C (Hyphomonas neptunium (strain ATCC 15444)).